Reading from the N-terminus, the 248-residue chain is MWLCPLALNLILMAASGAVCEVKDVCVGSPGIPGTPGSHGLPGRDGRDGLKGDPGPPGPMGPPGEMPCPPGNDGLPGAPGIPGECGEKGEPGERGPPGLPAHLDEELQATLHDFRHQILQTRGALSLQGSIMTVGEKVFSSNGQSITFDAIQEACARAGGRIAVPRNPEENEAIASFVKKYNTYAYVGLTEGPSPGDFRYSDGTPVNYTNWYRGEPAGRGKEQCVEMYTDGQWNDRNCLYSRLTICEF.

Positions 1 to 20 are cleaved as a signal peptide; that stretch reads MWLCPLALNLILMAASGAVC. Residues 28-100 enclose the Collagen-like domain; sequence GSPGIPGTPG…PGERGPPGLP (73 aa). A 4-hydroxyproline mark is found at P30, P33, P36, P42, P54, P57, P63, P67, and P70. The segment at 31-101 is disordered; it reads GIPGTPGSHG…GERGPPGLPA (71 aa). The span at 42–51 shows a compositional bias: basic and acidic residues; sequence PGRDGRDGLK. Positions 54–70 are enriched in pro residues; that stretch reads PGPPGPMGPPGEMPCPP. Positions 132 to 248 constitute a C-type lectin domain; sequence MTVGEKVFSS…LYSRLTICEF (117 aa). Disulfide bonds link C155/C246 and C224/C238. N207 carries an N-linked (GlcNAc...) asparagine glycan.

It belongs to the SFTPA family. In terms of assembly, oligomeric complex of 6 set of homotrimers. Interacts with CD93. As to quaternary structure, (Microbial infection) Binds M.bovis cell surface protein Apa via its glycosylated sites; probably also recognizes other bacterial moieties. (Microbial infection) Binds to the S.aureus extracellular adherence protein, Eap, thereby enhancing phagocytosis and killing of S.aureus by alveolar macrophages. In terms of assembly, (Microbial infection) Interacts with M.pneumoniae CARDS toxin; CARDS probably uses this protein as a receptor. N-acetylated.

The protein localises to the secreted. Its subcellular location is the extracellular space. It localises to the extracellular matrix. The protein resides in the surface film. Its function is as follows. In presence of calcium ions, it binds to surfactant phospholipids and contributes to lower the surface tension at the air-liquid interface in the alveoli of the mammalian lung and is essential for normal respiration. Enhances the expression of MYO18A/SP-R210 on alveolar macrophages. In terms of biological role, (Microbial infection) Recognition of M.tuberculosis by dendritic cells may occur partially via this molecule. Can recognize, bind, and opsonize pathogens to enhance their elimination by alveolar macrophages. (Microbial infection) Binds M.pneumoniae CARDS toxin, serves as one receptor for this pathogen. When SFTPA1 is down-regulated by siRNA, less toxin binds to human cells and less vacuolization (a symptom of M.pneumoniae infection) is seen. The polypeptide is Pulmonary surfactant-associated protein A1 (SFTPA1) (Homo sapiens (Human)).